We begin with the raw amino-acid sequence, 713 residues long: Nucleoporin NUP82 (713 aa).

The segment at 1-409 (MSQSSRLSAL…SDLNPLAGLK (409 aa)) is interaction with NUP116. The interaction with NSP1 and NUP159 stretch occupies residues 463 to 713 (TSISTEKSDT…VSQEFTTKTQ (251 aa)). Positions 582–713 (EAQNKKWDAQ…VSQEFTTKTQ (132 aa)) form a coiled coil. Positions 607–623 (KKLSQIAESNKFKEKKI) match the Bipartite nuclear localization signal motif.

Component of the nuclear pore complex (NPC). NPC constitutes the exclusive means of nucleocytoplasmic transport. NPCs allow the passive diffusion of ions and small molecules and the active, nuclear transport receptor-mediated bidirectional transport of macromolecules such as proteins, RNAs, ribonucleoparticles (RNPs), and ribosomal subunits across the nuclear envelope. Due to its 8-fold rotational symmetry, all subunits are present with 8 copies or multiples thereof. NUP82 is part of the NUP82 subcomplex. This subcomplex is the base for interactions with NUP116 and GLE2, with NUP42 and GLE1 and with DYN2.

Its subcellular location is the nucleus. The protein localises to the nuclear pore complex. The protein resides in the nucleus membrane. In terms of biological role, functions as a component of the nuclear pore complex (NPC). NPC components, collectively referred to as nucleoporins (NUPs), can play the role of both NPC structural components and of docking or interaction partners for transiently associated nuclear transport factors. It is specifically involved as part of the NUP82-NUP159-NSP1 subcomplex in nuclear mRNA and pre-ribosome export by acting as a linker tethering nucleoporins that are directly involved in nuclear transport to the NPC via its coiled-coil domain. This chain is Nucleoporin NUP82 (NUP82), found in Saccharomyces cerevisiae (strain ATCC 204508 / S288c) (Baker's yeast).